A 2715-amino-acid polypeptide reads, in one-letter code: Teneurin-3 (2715 aa).

Disordered regions lie at residues 1 to 38 (MDVKERRPYCSLTKSRREKERRYTNSSADNEECRVPTQ) and 142 to 223 (GRSS…AALP). One can recognise a Teneurin N-terminal domain in the interval 1-309 (MDVKERRPYC…KSSKYCSWRC (309 aa)). Topologically, residues 1–310 (MDVKERRPYC…SSKYCSWRCT (310 aa)) are cytoplasmic. A compositionally biased stretch (low complexity) spans 142–153 (GRSSCLSSRSNS). The segment covering 159-168 (DTEHENRSDS) has biased composition (basic and acidic residues). Over residues 171–182 (EQPSNNPGQPTL) the composition is skewed to polar residues. Residues 201-213 (TSLNRNSLTNRRN) show a composition bias toward low complexity. A helical transmembrane segment spans residues 311–331 (ALCAVGVSVLLAILLSYFIAM). The Extracellular portion of the chain corresponds to 332-2715 (HLFGLNWHLQ…FLRQSEIGKR (2384 aa)). N-linked (GlcNAc...) asparagine glycans are attached at residues Asn345, Asn380, and Asn419. EGF-like domains are found at residues 514–545 (SVVECPRNCHGNGECVSGTCHCFPGFLGPDCS), 546–576 (RAACPVLCSGNGQYSKGRCLCFSGWKGTECD), 578–610 (PTTQCIDPQCGGRGICIMGSCACNSGYKGENCE), 611–642 (EADCLDPGCSNHGVCIHGECHCNPGWGGSNCE), 644–677 (LKTMCADQCSGHGTYLQESGSCTCDPNWTGPDCS), 678–709 (NEICSVDCGSHGVCMGGSCRCEEGWTGPACNQ), 710–739 (RACHPRCAEHGTCKDGKCECSQGWNGEHCT), and 740–783 (IAHY…AGCD). Disulfide bonds link Cys518–Cys528, Cys522–Cys533, Cys535–Cys544, Cys553–Cys564, Cys566–Cys575, Cys582–Cys593, Cys587–Cys598, Cys600–Cys609, Cys614–Cys625, Cys619–Cys630, Cys632–Cys641, Cys652–Cys665, Cys667–Cys676, Cys681–Cys691, Cys685–Cys696, Cys698–Cys707, Cys712–Cys722, Cys716–Cys727, Cys729–Cys738, Cys752–Cys762, Cys756–Cys771, and Cys773–Cys782. A glycan (N-linked (GlcNAc...) asparagine) is linked at Asn670. N-linked (GlcNAc...) asparagine glycans are attached at residues Asn869 and Asn892. The NHL 1 repeat unit spans residues 1181 to 1209 (LLAPVALACGIDGSLYVGDFNYVRRIFPS). Asn1211 carries an N-linked (GlcNAc...) asparagine glycan. NHL repeat units follow at residues 1216–1260 (LELR…PKSL), 1286–1330 (ARCG…NGII), 1347–1387 (CDTS…ITEN), 1418–1445 (LESATAIAVSYSGVLYITETDEKKINRI), and 1474–1517 (CYQS…VSKN). A YD 1 repeat occupies 1527-1546 (YEVASPTDQELYIFDINGTH). Asn1543 and Asn1560 each carry an N-linked (GlcNAc...) asparagine glycan. YD repeat units follow at residues 1563–1583 (YSNDNDVTAVTDSNGNTLRIR), 1626–1645 (YHGNSGLLATKSDETGWTTF), and 1646–1668 (FDYDSEGRLTNVTFPTGVVTNLH). 4 N-linked (GlcNAc...) asparagine glycosylation sites follow: Asn1656, Asn1693, Asn1751, and Asn1836. YD repeat units lie at residues 1839 to 1858 (YSSTGQIASIQRGTTSEKVD), 1880 to 1898 (YLEKSMVLLLHSQRQYIFE), 1899 to 1919 (YDMWDRLSAITMPSVARHTMQ), 1926 to 1943 (YYRNIYNPPESNASIITD), 1944 to 1965 (YNEEGLLLQTAFLGTSRRVLFK), 1966 to 1983 (YRRQTRLSEILYDSTRVS), 1986 to 2006 (YDETAGVLKTVNLQSDGFICT), 2009 to 2029 (YRQIGPLIDRQIFRFSEDGMV), 2037 to 2056 (YDNSFRVTSMQGVINETPLP), 2062 to 2079 (FDDISGKVEQFGKFGVIY), 2080 to 2106 (YDINQIISTAVMTYTKHFDAHGRIKEI), 2108 to 2121 (YEIFRSLMYWITIQ), 2122 to 2145 (YDNMGRVTKREIKIGPFANTTKYA), 2148 to 2168 (YDVDGQLQTVYLNEKIMWRYN), 2169 to 2189 (YDLNGNLHLLNPSSSARLTPL), 2191 to 2211 (YDLRDRITRLGDVQYRLDEDG), 2223 to 2243 (YSSKGLLTRVYSKGSGWTVIY), and 2245 to 2265 (YDGLGRRVSSKTSLGQHLQFF). An N-linked (GlcNAc...) asparagine glycan is attached at Asn1937. Asn2140 carries an N-linked (GlcNAc...) asparagine glycan. The N-linked (GlcNAc...) asparagine glycan is linked to Asn2280. One copy of the YD 23 repeat lies at 2291–2332 (YDLQGHLFAMEISSGDEFYIASDNTGTPLAVFSSNGLMLKQT). Asn2592 carries N-linked (GlcNAc...) asparagine glycosylation.

Belongs to the tenascin family. Teneurin subfamily. Homodimer; disulfide-linked; to mediate homophilic cell adhesion. Most isoforms (isoform-type A and type-B) can mediate homophilic interaction. Heterodimer with either TENM1 or TENM2. May also form heterodimer with TENM4. Isoform A0B0: Does not form homodimer to mediate homophilic cell adhesion. Isoform A0B0: Heterodimer with ADGRL3. In brain, expressed in highly specific regions of the postnatal brain: expressed in restricted domains of the developing hippocampal region, including proximal CA1, distal subiculum, and medial entorhinal cortex (at protein level). Expression matches with topographic connectivity between entorhinal cortex, CA1, and subiculum (at protein level). Also specifically expressed in subregions of the presubiculum, parasubiculum, medial mammillary nucleus and anteroventral thalamic nucleus that are topographically connected with subiculum or entorhinal cortex (at protein level). Expressed in neurons of the developing visual pathway (at protein level). Expressed in the dorsal and ventral lateral geniculate nucleus (dLGN and vLGN) and optic tract at birth. Expressed in ipsilateral retinal axons of terminal zones (TZs) in the developing superior colliculus (SC) throughout the first postnatal week. Expressed in the layer V of the visual caudal cortex. Expressed in the femoral and mandibular condylar cartilages. Strongly expressed in fibrous and proliferating chondrocytes. Poorly expressed in mature chondrocytes. Not expressed in hypertrophic chondrocytes.

It is found in the cell membrane. The protein resides in the cell projection. The protein localises to the axon. Its function is as follows. Involved in neural development by regulating the establishment of proper connectivity within the nervous system. Acts in both pre- and postsynaptic neurons in the hippocampus to control the assembly of a precise topographic projection: required in both CA1 and subicular neurons for the precise targeting of proximal CA1 axons to distal subiculum, probably by promoting homophilic cell adhesion. Promotes homophilic adhesion in a splicing isoform-dependent manner: most isoforms (isoform-type A and type-B) can mediate homophilic interaction. Promotes axon guidance. Required for proper dendrite morphogenesis and axon targeting in the vertebrate visual system, thereby playing a key role in the development of the visual pathway. Regulates the formation in ipsilateral retinal mapping to both the dorsal lateral geniculate nucleus (dLGN) and the superior colliculus (SC). May also be involved in the differentiation of the fibroblast-like cells in the superficial layer of mandibular condylar cartilage into chondrocytes. The polypeptide is Teneurin-3 (Mus musculus (Mouse)).